The sequence spans 287 residues: MHSKPQWLRAKAPTGEVFNETLNIVKLHNLHTVCEEAACPNIGECWNKRHATVMILGSVCTRACAFCNVATGIPDKLDPHEPENLAKAIKKLNLKHVVITSVDRDDLPDGGANQFIQCIEEIRKITSETTIEILTPDFLNKKGAFEAIAVASPDVYNHNIETVPRLYAKIRPRARYFHSLYLLKMVKQINPKVFTKSGLMVGLGETKEEILQVMDDLRSAEVDFITIGQYLQPTPKHAKLDRYVTPEEFEHYKYIAYSKGFLVVASSPLTRSSYHAEEDFNRLKACR.

The [4Fe-4S] cluster site is built by C34, C39, C45, C60, C64, C67, and S273. Residues 46–262 enclose the Radical SAM core domain; sequence WNKRHATVMI…KYIAYSKGFL (217 aa).

This sequence belongs to the radical SAM superfamily. Lipoyl synthase family. [4Fe-4S] cluster serves as cofactor.

The protein localises to the cytoplasm. The enzyme catalyses [[Fe-S] cluster scaffold protein carrying a second [4Fe-4S](2+) cluster] + N(6)-octanoyl-L-lysyl-[protein] + 2 oxidized [2Fe-2S]-[ferredoxin] + 2 S-adenosyl-L-methionine + 4 H(+) = [[Fe-S] cluster scaffold protein] + N(6)-[(R)-dihydrolipoyl]-L-lysyl-[protein] + 4 Fe(3+) + 2 hydrogen sulfide + 2 5'-deoxyadenosine + 2 L-methionine + 2 reduced [2Fe-2S]-[ferredoxin]. The protein operates within protein modification; protein lipoylation via endogenous pathway; protein N(6)-(lipoyl)lysine from octanoyl-[acyl-carrier-protein]: step 2/2. In terms of biological role, catalyzes the radical-mediated insertion of two sulfur atoms into the C-6 and C-8 positions of the octanoyl moiety bound to the lipoyl domains of lipoate-dependent enzymes, thereby converting the octanoylated domains into lipoylated derivatives. In Wolbachia pipientis wMel, this protein is Lipoyl synthase.